The sequence spans 174 residues: Cytoglobin-1 (174 aa).

A Globin domain is found at 15–165 (SLTEEDVCVI…LYWQMNRVYA (151 aa)). Heme b-binding residues include His-78 and His-110.

The protein belongs to the globin family. As to quaternary structure, monomeric. In terms of tissue distribution, expressed in all tissues examined with highest levels in brain, eye, gut and heart.

Its subcellular location is the cytoplasm. It is found in the nucleus. It catalyses the reaction Fe(II)-heme b-[protein] + nitric oxide + O2 = Fe(III)-heme b-[protein] + nitrate. The catalysed reaction is Fe(III)-heme b-[protein] + nitric oxide + H2O = Fe(II)-heme b-[protein] + nitrite + 2 H(+). It carries out the reaction 2 superoxide + 2 H(+) = H2O2 + O2. The enzyme catalyses H2O2 + AH2 = A + 2 H2O. Its function is as follows. Probable multifunctional globin with a hexacoordinated heme iron required for the catalysis of various reactions depending on redox condition of the cell as well as oxygen availability. Has a nitric oxide dioxygenase (NOD) activity and is most probably involved in cell-mediated and oxygen-dependent nitric oxide consumption. Under normoxic conditions functions as a nitric oxide dioxygenase (NOD) but under hypoxic conditions the globin may switch its function to that of a nitrite (NO2) reductase (NiR), generating nitric oxide. Could also have peroxidase and superoxide dismutase activities, detoxifying reactive oxygen species and protecting cells against oxidative stress. Also binds dioxygen with low affinity and could function as an oxygen sensor but has probably no function as a respiratory oxygen carrier. In Danio rerio (Zebrafish), this protein is Cytoglobin-1 (cygb1).